The sequence spans 616 residues: Prolactin receptor (616 aa).

An N-terminal signal peptide occupies residues 1 to 24; that stretch reads MKENVASMIVFLLLLFLNIRLLKG. Residues 25–234 lie on the Extracellular side of the membrane; that stretch reads QSPPGKPFIF…QIPNDFTMKD (210 aa). 2 consecutive Fibronectin type-III domains span residues 27–128 and 129–229; these read PPGK…VEPD and PPVN…IPND. Residues C36 and C46 are joined by a disulfide bond. The N-linked (GlcNAc...) asparagine glycan is linked to N59. A disulfide bridge links C75 with C86. N-linked (GlcNAc...) asparagine glycosylation is found at N104 and N132. The Zn(2+) site is built by D211 and H212. A WSXWS motif motif is present at residues 215–219; sequence WSVWS. Residues 235 to 258 traverse the membrane as a helical segment; that stretch reads ITVWIFVAVLSTIICLIMVWAVAL. Over 259–616 the chain is Cytoplasmic; sequence KGYSMVTCIF…DPACFMHSLH (358 aa). Residues 267–275 carry the Box 1 motif motif; sequence IFPPVPGPK. Disordered regions lie at residues 326 to 375, 454 to 492, and 568 to 593; these read MPAH…STFH, QSSK…PKEK, and ESTK…STAP. Residues 463–482 show a composition bias toward basic and acidic residues; sequence GEEKATKQREVESSHSKAEQ.

It belongs to the type I cytokine receptor family. Type 1 subfamily. As to quaternary structure, interacts with SMARCA1. Interacts with NEK3 and VAV2 and this interaction is prolactin-dependent.

It localises to the membrane. Functionally, this is a receptor for the anterior pituitary hormone prolactin. The sequence is that of Prolactin receptor (PRLR) from Oryctolagus cuniculus (Rabbit).